Consider the following 274-residue polypeptide: Dermonecrotic toxin LarSicTox-alphaIB2bii (274 aa).

Histidine 3 is an active-site residue. 2 residues coordinate Mg(2+): glutamate 23 and aspartate 25. The Nucleophile role is filled by histidine 39. 2 disulfide bridges follow: cysteine 43-cysteine 49 and cysteine 45-cysteine 188. Aspartate 83 is a Mg(2+) binding site. N-linked (GlcNAc...) asparagine glycosylation is present at asparagine 251.

The protein belongs to the arthropod phospholipase D family. Class II subfamily. Mg(2+) is required as a cofactor. As to expression, expressed by the venom gland.

Its subcellular location is the secreted. It catalyses the reaction an N-(acyl)-sphingosylphosphocholine = an N-(acyl)-sphingosyl-1,3-cyclic phosphate + choline. The enzyme catalyses an N-(acyl)-sphingosylphosphoethanolamine = an N-(acyl)-sphingosyl-1,3-cyclic phosphate + ethanolamine. The catalysed reaction is a 1-acyl-sn-glycero-3-phosphocholine = a 1-acyl-sn-glycero-2,3-cyclic phosphate + choline. It carries out the reaction a 1-acyl-sn-glycero-3-phosphoethanolamine = a 1-acyl-sn-glycero-2,3-cyclic phosphate + ethanolamine. Its function is as follows. Dermonecrotic toxins cleave the phosphodiester linkage between the phosphate and headgroup of certain phospholipids (sphingolipid and lysolipid substrates), forming an alcohol (often choline) and a cyclic phosphate. This toxin acts on sphingomyelin (SM). It may also act on ceramide phosphoethanolamine (CPE), lysophosphatidylcholine (LPC) and lysophosphatidylethanolamine (LPE), but not on lysophosphatidylserine (LPS), and lysophosphatidylglycerol (LPG). It acts by transphosphatidylation, releasing exclusively cyclic phosphate products as second products. Induces dermonecrosis, hemolysis, increased vascular permeability, edema, inflammatory response, and platelet aggregation. The chain is Dermonecrotic toxin LarSicTox-alphaIB2bii from Loxosceles arizonica (Arizona brown spider).